We begin with the raw amino-acid sequence, 390 residues long: GTPase Obg (390 aa).

The region spanning 1 to 159 is the Obg domain; it reads MKFVDEAAIL…RDILLELLLL (159 aa). An OBG-type G domain is found at 160 to 333; sequence ADVGMLGLPN…LCWDVMKFIN (174 aa). Residues 166-173, 191-195, 213-216, 283-286, and 314-316 each bind GTP; these read GLPNAGKS, FTTLV, DIPG, NKID, and SAV. Mg(2+)-binding residues include Ser-173 and Thr-193. Positions 366–384 are enriched in acidic residues; that stretch reads AEADDDWDDDWDEEDDEGV. The interval 366 to 390 is disordered; it reads AEADDDWDDDWDEEDDEGVEIIYQK.

The protein belongs to the TRAFAC class OBG-HflX-like GTPase superfamily. OBG GTPase family. Monomer. Mg(2+) is required as a cofactor.

Its subcellular location is the cytoplasm. Functionally, an essential GTPase which binds GTP, GDP and possibly (p)ppGpp with moderate affinity, with high nucleotide exchange rates and a fairly low GTP hydrolysis rate. Plays a role in control of the cell cycle, stress response, ribosome biogenesis and in those bacteria that undergo differentiation, in morphogenesis control. The sequence is that of GTPase Obg from Serratia proteamaculans (strain 568).